The following is a 144-amino-acid chain: D-aminoacyl-tRNA deacylase (144 aa).

The short motif at 136 to 137 (GP) is the Gly-cisPro motif, important for rejection of L-amino acids element.

This sequence belongs to the DTD family. Homodimer.

Its subcellular location is the cytoplasm. It catalyses the reaction glycyl-tRNA(Ala) + H2O = tRNA(Ala) + glycine + H(+). The enzyme catalyses a D-aminoacyl-tRNA + H2O = a tRNA + a D-alpha-amino acid + H(+). Functionally, an aminoacyl-tRNA editing enzyme that deacylates mischarged D-aminoacyl-tRNAs. Also deacylates mischarged glycyl-tRNA(Ala), protecting cells against glycine mischarging by AlaRS. Acts via tRNA-based rather than protein-based catalysis; rejects L-amino acids rather than detecting D-amino acids in the active site. By recycling D-aminoacyl-tRNA to D-amino acids and free tRNA molecules, this enzyme counteracts the toxicity associated with the formation of D-aminoacyl-tRNA entities in vivo and helps enforce protein L-homochirality. The sequence is that of D-aminoacyl-tRNA deacylase from Corynebacterium efficiens (strain DSM 44549 / YS-314 / AJ 12310 / JCM 11189 / NBRC 100395).